Reading from the N-terminus, the 88-residue chain is Large ribosomal subunit protein eL37 (88 aa).

Zn(2+) is bound by residues cysteine 19, cysteine 22, cysteine 34, and cysteine 37. Residues 19–37 form a C4-type zinc finger; it reads CNRCGKRSFHVQKKTCASC.

It belongs to the eukaryotic ribosomal protein eL37 family. Requires Zn(2+) as cofactor.

Binds to the 23S rRNA. The polypeptide is Large ribosomal subunit protein eL37 (RPL37) (Debaryomyces hansenii (strain ATCC 36239 / CBS 767 / BCRC 21394 / JCM 1990 / NBRC 0083 / IGC 2968) (Yeast)).